The sequence spans 661 residues: uncharacterized protein (661 aa).

Transmembrane regions (helical) follow at residues 27–47 (LAIGLLGVCAVVAAFGLVSGA), 68–88 (VGFFAASLAGALCLGALIHVV), 116–136 (LWLGLAATMVVIQAAHDTGVG), 150–170 (VAASEMARGWIVAAICALVVA), 179–199 (WLGHVVLLVPTVLAVVATAVT), 214–234 (AAIVFAVAFATLTGLKIAAAL), 251–271 (GALALAYGAMLLYLFIPGWAV), 279–299 (GLLAGVILTSVWLFDCWRLLV), 313–333 (GAALAMMAAMASIAAMAVMTA), 369–389 (SLIGAAGVVLAIGYAAGFAAL), 396–416 (WPVGRLIAWLTGCAALVFTSG), 435–455 (MTLNMFIPVLLVLGGPVTLAL), 488–508 (PITAFVLFVASPYIVYFTPLF), 519–539 (EFMAIHFLVVGYLFYWAIIGI), 552–572 (IGLLFAVMPFHAFFGIALMTM), and 599–619 (GGGIAWSLTELPVIMVIVALV).

This sequence to M.leprae ML1998.

The protein localises to the cell membrane. This is an uncharacterized protein from Mycobacterium tuberculosis (strain CDC 1551 / Oshkosh).